Consider the following 83-residue polypeptide: MKTLLLTLLVVTIVCLDLGYTLECHNQQSSETPTTTGCSGGETNCYKKRWRDHRGYRIERGCGCPSVKKGIEINCCTTDRCNN.

The N-terminal stretch at 1-21 is a signal peptide; the sequence is MKTLLLTLLVVTIVCLDLGYT. Cystine bridges form between C24/C45, C38/C62, C64/C75, and C76/C81.

The protein belongs to the three-finger toxin family. Short-chain subfamily. Type I alpha-neurotoxin sub-subfamily. In terms of tissue distribution, expressed by the venom gland.

It localises to the secreted. Its function is as follows. Binds to muscle nicotinic acetylcholine receptor (nAChR) and inhibit acetylcholine from binding to the receptor, thereby impairing neuromuscular transmission. The polypeptide is Alpha-neurotoxin NTX-3 (Naja sputatrix (Malayan spitting cobra)).